The sequence spans 785 residues: Hyperosmolality-gated Ca2+ permeable channel 1.7 (785 aa).

A helical transmembrane segment spans residues 7–27 (IGLSAAINLLSAFAFLFAFAM). The residue at position 54 (S54) is a Phosphoserine. 9 helical membrane-spanning segments follow: residues 101-121 (IYLL…GVLV), 156-176 (FWAH…ILYM), 373-393 (LLTT…IAFV), 425-445 (FLPG…LMTM), 465-485 (YFWF…TAFQ), 510-530 (ATFF…AEIL), 582-602 (AVAP…YVVF), 628-648 (LIIC…TKKF), and 651-671 (VTAL…YCAG). The tract at residues 725–761 (VDEEESNPLVRTKRTSQGTTRYNSEASSSATTTPVAN) is disordered. Polar residues predominate over residues 739–761 (TSQGTTRYNSEASSSATTTPVAN).

It belongs to the CSC1 (TC 1.A.17) family. Phosphorylated and activated by BIK1.

The protein resides in the membrane. The catalysed reaction is Ca(2+)(in) = Ca(2+)(out). Its function is as follows. Calcium-permeable channel involved in plant stomatal immunity. The polypeptide is Hyperosmolality-gated Ca2+ permeable channel 1.7 (Arabidopsis thaliana (Mouse-ear cress)).